A 200-amino-acid chain; its full sequence is Ribonuclease HII (200 aa).

In terms of domain architecture, RNase H type-2 spans 11–200 (QSIAGVDEVG…VRRALISLTG (190 aa)). A divalent metal cation is bound by residues aspartate 17, glutamate 18, and aspartate 109.

It belongs to the RNase HII family. Mn(2+) is required as a cofactor. It depends on Mg(2+) as a cofactor.

The protein localises to the cytoplasm. The catalysed reaction is Endonucleolytic cleavage to 5'-phosphomonoester.. Endonuclease that specifically degrades the RNA of RNA-DNA hybrids. The protein is Ribonuclease HII of Hamiltonella defensa subsp. Acyrthosiphon pisum (strain 5AT).